The primary structure comprises 358 residues: Pituitary-specific positive transcription factor 1 (358 aa).

Residues 5–12 (AFSADSFT) carry the 9aaTAD motif. The segment at 164–195 (PAVLSEEPPLGGTKDLRLRSRPPDDPPDMDSP) is disordered. Residues 177 to 187 (KDLRLRSRPPD) are compositionally biased toward basic and acidic residues. The region spanning 192-266 (MDSPQIRELE…ILAKWLDEAE (75 aa)) is the POU-specific domain. Residues 282–341 (KRKRRTTISLGAKEALERSFGEKIKPSSQEIVRMAEGLHLEKEVVRVWFCNRRQREKRVK) constitute a DNA-binding region (homeobox).

The protein belongs to the POU transcription factor family. Class-1 subfamily.

The protein resides in the nucleus. In terms of biological role, transcription factor that activates growth hormone and prolactin genes. Specifically binds to the consensus sequence 5'-TAAAT-3'. This is Pituitary-specific positive transcription factor 1 (pou1f1) from Oncorhynchus mykiss (Rainbow trout).